The primary structure comprises 95 residues: Progonadoliberin-1 (95 aa).

A signal peptide spans 1-25 (MAPQTSNLWILLLLVVVMMMSQGCC). Gln26 is subject to Pyrrolidone carboxylic acid. Gly35 carries the glycine amide modification.

The protein belongs to the GnRH family.

The protein localises to the secreted. In terms of biological role, stimulates the secretion of gonadotropins. In Sparus aurata (Gilthead sea bream), this protein is Progonadoliberin-1 (gnrh1).